The primary structure comprises 101 residues: MTKESIKAREIKRLKLVNKYYTQRISLKKIIIDQRIPNEERWNAVLKLQTLPRDSSPSRRRNRCRHTGRPHAFLRKFGLSRMKVREAAMRGEIPGLRKASW.

This sequence belongs to the universal ribosomal protein uS14 family. Part of the 30S ribosomal subunit. Contacts proteins S3 and S10.

Functionally, binds 16S rRNA, required for the assembly of 30S particles and may also be responsible for determining the conformation of the 16S rRNA at the A site. The protein is Small ribosomal subunit protein uS14 of Blochmanniella pennsylvanica (strain BPEN).